A 475-amino-acid chain; its full sequence is BICD family-like cargo adapter 2 (475 aa).

The stretch at 56-275 (ELGKALLERN…LKELQDELHM (220 aa)) forms a coiled coil. Polar residues-rich tracts occupy residues 286-300 (HSSLHSEIQQSTAVQ) and 308-318 (SAETQSITSGY). Residues 286 to 318 (HSSLHSEIQQSTAVQNHEKGRNSAETQSITSGY) form a disordered region. Positions 340 to 413 (RLQDQVTMQH…ESLNLQLLST (74 aa)) form a coiled coil. Positions 440–450 (QSQKQQETQKP) are enriched in low complexity. The tract at residues 440–459 (QSQKQQETQKPPESPQNSFL) is disordered.

The protein belongs to the BICDR family.

The protein is BICD family-like cargo adapter 2 (bicdl2) of Xenopus tropicalis (Western clawed frog).